Here is a 576-residue protein sequence, read N- to C-terminus: Arginine--tRNA ligase (576 aa).

A 'HIGH' region motif is present at residues 126–136; sequence ANPTGPMHIGH.

The protein belongs to the class-I aminoacyl-tRNA synthetase family. In terms of assembly, monomer.

The protein resides in the cytoplasm. It catalyses the reaction tRNA(Arg) + L-arginine + ATP = L-arginyl-tRNA(Arg) + AMP + diphosphate. This Rickettsia typhi (strain ATCC VR-144 / Wilmington) protein is Arginine--tRNA ligase.